Here is a 624-residue protein sequence, read N- to C-terminus: (-)-beta-phellandrene synthase 2, chloroplastic (624 aa).

Residues 1-47 (MALVSVAPLVSMRRSLFSSPYELKSIDKTIPNLVMCRKRMLGRPSIR) constitute a chloroplast transit peptide. Mg(2+) is bound by residues aspartate 375, aspartate 379, and aspartate 527. The short motif at 375-379 (DDIYD) is the DDXXD motif element.

This sequence belongs to the terpene synthase family. Tpsd subfamily. It depends on Mg(2+) as a cofactor. The cofactor is Mn(2+).

Its subcellular location is the plastid. It is found in the chloroplast. It catalyses the reaction (2E)-geranyl diphosphate = (-)-beta-phellandrene + diphosphate. Its pathway is terpene metabolism; oleoresin biosynthesis. It participates in secondary metabolite biosynthesis; terpenoid biosynthesis. Monoterpene synthase (TPS) involved in the biosynthesis of monoterpene natural products included in conifer oleoresin secretions and volatile emissions; these compounds contribute to biotic and abiotic stress defense against herbivores and pathogens. Catalyzes the conversion of (2E)-geranyl diphosphate (GPP) to (-)-beta-phellandrene. The sequence is that of (-)-beta-phellandrene synthase 2, chloroplastic from Pinus contorta (Shore pine).